The following is a 67-amino-acid chain: Large ribosomal subunit protein uL30 (67 aa).

The protein belongs to the universal ribosomal protein uL30 family. As to quaternary structure, part of the 50S ribosomal subunit.

The chain is Large ribosomal subunit protein uL30 from Thermotoga maritima (strain ATCC 43589 / DSM 3109 / JCM 10099 / NBRC 100826 / MSB8).